The following is a 220-amino-acid chain: Fructose-6-phosphate aldolase (220 aa).

The active-site Schiff-base intermediate with substrate is the lysine 85.

Belongs to the transaldolase family. Type 3A subfamily. Homodecamer.

The protein localises to the cytoplasm. It catalyses the reaction beta-D-fructose 6-phosphate = dihydroxyacetone + D-glyceraldehyde 3-phosphate. Its function is as follows. Catalyzes the reversible formation of fructose 6-phosphate from dihydroxyacetone and D-glyceraldehyde 3-phosphate via an aldolization reaction. This Salmonella typhi protein is Fructose-6-phosphate aldolase.